Here is a 244-residue protein sequence, read N- to C-terminus: 1-(5-phosphoribosyl)-5-[(5-phosphoribosylamino)methylideneamino] imidazole-4-carboxamide isomerase (244 aa).

D8 functions as the Proton acceptor in the catalytic mechanism. D129 functions as the Proton donor in the catalytic mechanism.

The protein belongs to the HisA/HisF family.

It is found in the cytoplasm. The enzyme catalyses 1-(5-phospho-beta-D-ribosyl)-5-[(5-phospho-beta-D-ribosylamino)methylideneamino]imidazole-4-carboxamide = 5-[(5-phospho-1-deoxy-D-ribulos-1-ylimino)methylamino]-1-(5-phospho-beta-D-ribosyl)imidazole-4-carboxamide. The protein operates within amino-acid biosynthesis; L-histidine biosynthesis; L-histidine from 5-phospho-alpha-D-ribose 1-diphosphate: step 4/9. The protein is 1-(5-phosphoribosyl)-5-[(5-phosphoribosylamino)methylideneamino] imidazole-4-carboxamide isomerase of Chelativorans sp. (strain BNC1).